We begin with the raw amino-acid sequence, 463 residues long: HEPACAM family member 2 (463 aa).

A signal peptide spans 1–32 (MGQDAFMELLRSMVGLSLCKIHLLLIAGSCLG). N-linked (GlcNAc...) asparagine glycosylation is found at Asn86, Asn130, and Asn166. 2 consecutive Ig-like C2-type domains span residues 150–234 (PMVQ…SDII) and 236–332 (PTIY…TRFT). Cystine bridges form between Cys171-Cys220 and Cys271-Cys316. Residue Asn321 is glycosylated (N-linked (GlcNAc...) asparagine). Residues 353–373 (LASITGISLFLIISMCLLFLW) traverse the membrane as a helical segment. Residues 374–463 (KKYQPYKAIR…IPEQQQENTE (90 aa)) lie on the Cytoplasmic side of the membrane.

Poly-ADP-ribosylated (PARsylated) by tankyrase TNKS during late G2 and prophase, leading to translocation to mitotic centrosomes. Post-translationally, N-glycosylated.

Its subcellular location is the golgi apparatus membrane. The protein resides in the cytoplasm. The protein localises to the cytoskeleton. It localises to the spindle. It is found in the microtubule organizing center. Its subcellular location is the centrosome. The protein resides in the midbody. Its function is as follows. Required during prometaphase for centrosome maturation. Following poly-ADP-ribosylation (PARsylation) by TNKS, translocates from the Golgi apparatus to mitotic centrosomes and plays a key role in the formation of robust microtubules for prompt movement of chromosomes: anchors AKAP9/CG-NAP, a scaffold protein of the gamma-tubulin ring complex and promotes centrosome maturation. This Mus musculus (Mouse) protein is HEPACAM family member 2 (Hepacam2).